The sequence spans 764 residues: Bifunctional type I diterpene synthase tndC (764 aa).

The interval 1 to 324 is terpene cyclase; it reads MEYRYSTVVD…CPRYHPWSSY (324 aa). Mg(2+) contacts are provided by Asp-92 and Asp-96. The DDXXD 1 motif lies at 92–96; sequence DDVTD. Positions 224–232 match the NSE/DTE motif; that stretch reads NDLYSWQKE. The tract at residues 325-761 is prenyltransferase; sequence NERQLDWMKN…FQLRLILEML (437 aa). The tract at residues 377–403 is disordered; the sequence is AVNGNGASHTSSIKGSTGGNGVTHSPV. Positions 381 to 391 are enriched in polar residues; sequence NGASHTSSIKG. Isopentenyl diphosphate is bound by residues Lys-484, Arg-487, and His-516. Mg(2+)-binding residues include Asp-523 and Asp-527. A DDXXD 2 motif is present at residues 523–527; it reads DDLED. Arg-532 provides a ligand contact to dimethylallyl diphosphate. Residue Arg-533 coordinates isopentenyl diphosphate. Residues Lys-610, Thr-611, Gln-646, Asn-653, Lys-663, and Lys-673 each coordinate dimethylallyl diphosphate.

It in the N-terminal section; belongs to the terpene synthase family. In the C-terminal section; belongs to the FPP/GGPP synthase family.

The enzyme catalyses isopentenyl diphosphate + (2E,6E)-farnesyl diphosphate = (2E,6E,10E)-geranylgeranyl diphosphate + diphosphate. The catalysed reaction is (2E,6E,10E)-geranylgeranyl diphosphate = talarodiene + diphosphate. It participates in secondary metabolite biosynthesis; terpenoid biosynthesis. In terms of biological role, bifunctional type I diterpene synthase; part of the gene cluster that mediates the biosynthesis of talaronoid C, a fusicoccane diterpenoid with an unprecedented tricyclic 5/8/6 ring system. The first step in the pathway is performed by the fusicoccadiene synthase tndC that possesses both prenyl transferase and terpene cyclase activity, converting isopentenyl diphosphate and dimethylallyl diphosphate into geranylgeranyl diphosphate (GGDP) and further converting GGDP into talarodiene, a precursor for talaronoid C. The remaining enzymes from the cluster include the cytochrome P450 monooxygenase tndB, the aldehyde reductase tndE and the alcohol dehydrogenase tndF that are involved in the conversion of talarodiene into talaronoid C. In Aspergillus flavipes, this protein is Bifunctional type I diterpene synthase tndC.